We begin with the raw amino-acid sequence, 95 residues long: Integration host factor subunit beta (95 aa).

The tract at residues 56–76 (RAPRTGRNPKTGTSVELDGKY) is disordered.

This sequence belongs to the bacterial histone-like protein family. Heterodimer of an alpha and a beta chain.

Functionally, this protein is one of the two subunits of integration host factor, a specific DNA-binding protein that functions in genetic recombination as well as in transcriptional and translational control. This chain is Integration host factor subunit beta, found in Shewanella denitrificans (strain OS217 / ATCC BAA-1090 / DSM 15013).